The primary structure comprises 400 residues: 1-deoxy-D-xylulose 5-phosphate reductoisomerase (400 aa).

Thr10, Gly11, Ser12, Ile13, Gly36, Asn38, and Asn124 together coordinate NADPH. Position 125 (Lys125) interacts with 1-deoxy-D-xylulose 5-phosphate. Position 126 (Glu126) interacts with NADPH. A Mn(2+)-binding site is contributed by Asp150. 1-deoxy-D-xylulose 5-phosphate contacts are provided by Ser151, Glu152, Ser186, and His209. Position 152 (Glu152) interacts with Mn(2+). Gly215 contacts NADPH. 4 residues coordinate 1-deoxy-D-xylulose 5-phosphate: Ser222, Asn227, Lys228, and Glu231. Glu231 is a Mn(2+) binding site.

This sequence belongs to the DXR family. Requires Mg(2+) as cofactor. It depends on Mn(2+) as a cofactor.

It catalyses the reaction 2-C-methyl-D-erythritol 4-phosphate + NADP(+) = 1-deoxy-D-xylulose 5-phosphate + NADPH + H(+). It participates in isoprenoid biosynthesis; isopentenyl diphosphate biosynthesis via DXP pathway; isopentenyl diphosphate from 1-deoxy-D-xylulose 5-phosphate: step 1/6. Catalyzes the NADPH-dependent rearrangement and reduction of 1-deoxy-D-xylulose-5-phosphate (DXP) to 2-C-methyl-D-erythritol 4-phosphate (MEP). The chain is 1-deoxy-D-xylulose 5-phosphate reductoisomerase from Aliivibrio fischeri (strain ATCC 700601 / ES114) (Vibrio fischeri).